The sequence spans 498 residues: ATP synthase subunit beta, chloroplastic (498 aa).

172 to 179 (GGAGVGKT) is an ATP binding site.

The protein belongs to the ATPase alpha/beta chains family. As to quaternary structure, F-type ATPases have 2 components, CF(1) - the catalytic core - and CF(0) - the membrane proton channel. CF(1) has five subunits: alpha(3), beta(3), gamma(1), delta(1), epsilon(1). CF(0) has four main subunits: a(1), b(1), b'(1) and c(9-12).

The protein resides in the plastid. It localises to the chloroplast thylakoid membrane. The enzyme catalyses ATP + H2O + 4 H(+)(in) = ADP + phosphate + 5 H(+)(out). Produces ATP from ADP in the presence of a proton gradient across the membrane. The catalytic sites are hosted primarily by the beta subunits. This chain is ATP synthase subunit beta, chloroplastic, found in Lolium perenne (Perennial ryegrass).